We begin with the raw amino-acid sequence, 1465 residues long: Ankyrin and armadillo repeat-containing protein (1465 aa).

A helical transmembrane segment spans residues 313–329; the sequence is MGYLKLICFLIPFLLSL. ANK repeat units follow at residues 532–561, 582–611, 615–644, 651–680, and 684–714; these read AGYA…NVNQ, NGPT…DYTL, RGWM…SLLE, NQCT…NWRK, and KGNN…ELPV. ARM repeat units follow at residues 745 to 784, 786 to 825, 827 to 865, 868 to 907, 910 to 949, and 1085 to 1125; these read DRYW…NIST, VSIV…DVAK, ENKD…VLCM, ESNQ…EVAR, KEVQ…SLAN, and PMSQ…CIVL. Residues 1431 to 1465 form a disordered region; it reads KLGKDEQKANPDPPAFLNKLGKDEQNANPDPAESQ.

The protein resides in the membrane. This is Ankyrin and armadillo repeat-containing protein (Ankar) from Mus musculus (Mouse).